We begin with the raw amino-acid sequence, 326 residues long: Structural protein ORF326a (326 aa).

The disordered stretch occupies residues 1-28 (MSTTFRGKKEEEEEEEEEKEEKEEELFN). Residues 11–26 (EEEEEEEEKEEKEEEL) show a composition bias toward acidic residues.

The protein localises to the virion. The polypeptide is Structural protein ORF326a (Acidianus two-tailed virus (ATV)).